We begin with the raw amino-acid sequence, 433 residues long: Phosphomethylpyrimidine synthase (433 aa).

Substrate-binding positions include Asn-66, Met-94, Tyr-123, His-162, 184-186 (SRG), 225-228 (DALR), and Glu-264. Residue His-268 participates in Zn(2+) binding. Residue Tyr-291 participates in substrate binding. His-332 provides a ligand contact to Zn(2+). Cys-408, Cys-411, and Cys-415 together coordinate [4Fe-4S] cluster.

It belongs to the ThiC family. The cofactor is [4Fe-4S] cluster.

It catalyses the reaction 5-amino-1-(5-phospho-beta-D-ribosyl)imidazole + S-adenosyl-L-methionine = 4-amino-2-methyl-5-(phosphooxymethyl)pyrimidine + CO + 5'-deoxyadenosine + formate + L-methionine + 3 H(+). Its pathway is cofactor biosynthesis; thiamine diphosphate biosynthesis. Functionally, catalyzes the synthesis of the hydroxymethylpyrimidine phosphate (HMP-P) moiety of thiamine from aminoimidazole ribotide (AIR) in a radical S-adenosyl-L-methionine (SAM)-dependent reaction. This is Phosphomethylpyrimidine synthase from Saccharolobus islandicus (strain M.16.27) (Sulfolobus islandicus).